A 260-amino-acid chain; its full sequence is Sugar fermentation stimulation protein homolog (260 aa).

The protein belongs to the SfsA family.

This chain is Sugar fermentation stimulation protein homolog, found in Chloroflexus aggregans (strain MD-66 / DSM 9485).